The sequence spans 212 residues: Large ribosomal subunit protein uL3 (212 aa).

Positions 140–155 (SVSHRAIGSTGQNQSP) are enriched in polar residues. Positions 140 to 166 (SVSHRAIGSTGQNQSPGKVFKGKKMPG) are disordered. Gln153 bears the N5-methylglutamine mark.

Belongs to the universal ribosomal protein uL3 family. As to quaternary structure, part of the 50S ribosomal subunit. Forms a cluster with proteins L14 and L19. In terms of processing, methylated by PrmB.

In terms of biological role, one of the primary rRNA binding proteins, it binds directly near the 3'-end of the 23S rRNA, where it nucleates assembly of the 50S subunit. This Psychrobacter cryohalolentis (strain ATCC BAA-1226 / DSM 17306 / VKM B-2378 / K5) protein is Large ribosomal subunit protein uL3.